An 872-amino-acid polypeptide reads, in one-letter code: Alanine--tRNA ligase (872 aa).

Positions 567, 571, 669, and 673 each coordinate Zn(2+).

This sequence belongs to the class-II aminoacyl-tRNA synthetase family. Requires Zn(2+) as cofactor.

It localises to the cytoplasm. The enzyme catalyses tRNA(Ala) + L-alanine + ATP = L-alanyl-tRNA(Ala) + AMP + diphosphate. Its function is as follows. Catalyzes the attachment of alanine to tRNA(Ala) in a two-step reaction: alanine is first activated by ATP to form Ala-AMP and then transferred to the acceptor end of tRNA(Ala). Also edits incorrectly charged Ser-tRNA(Ala) and Gly-tRNA(Ala) via its editing domain. The chain is Alanine--tRNA ligase from Streptococcus thermophilus (strain CNRZ 1066).